Reading from the N-terminus, the 310-residue chain is AMMECR1-like protein (310 aa).

The interval 26–95 is disordered; that stretch reads LSGSGTHSHG…LSPLPRPNGT (70 aa). A compositionally biased stretch (polar residues) spans 28–66; sequence GSGTHSHGNQSTTVPGSSSGPLQNHQHVDSSSGRENVSD. Position 74 is a phosphoserine (serine 74). Residues 97–291 enclose the AMMECR1 domain; the sequence is NTTKNLVVTA…ISYAEYIASR (195 aa).

The sequence is that of AMMECR1-like protein (AMMECR1L) from Homo sapiens (Human).